A 305-amino-acid chain; its full sequence is Homoserine O-acetyltransferase (305 aa).

Cys-142 serves as the catalytic Acyl-thioester intermediate. Substrate is bound by residues Lys-163 and Ser-192. Catalysis depends on His-235, which acts as the Proton acceptor. Residue Glu-237 is part of the active site. Arg-249 serves as a coordination point for substrate.

It belongs to the MetA family.

The protein resides in the cytoplasm. The catalysed reaction is L-homoserine + acetyl-CoA = O-acetyl-L-homoserine + CoA. The protein operates within amino-acid biosynthesis; L-methionine biosynthesis via de novo pathway; O-acetyl-L-homoserine from L-homoserine: step 1/1. Its function is as follows. Transfers an acetyl group from acetyl-CoA to L-homoserine, forming acetyl-L-homoserine. The protein is Homoserine O-acetyltransferase of Bacteroides fragilis (strain YCH46).